We begin with the raw amino-acid sequence, 199 residues long: Protein P1 (199 aa).

In Rice tungro bacilliform virus (isolate Philippines) (RTBV), this protein is Protein P1.